We begin with the raw amino-acid sequence, 466 residues long: UPF0652 protein C16A11.03c (466 aa).

Belongs to the UPF0652 family.

It is found in the cytoplasm. The protein resides in the nucleus. In Schizosaccharomyces pombe (strain 972 / ATCC 24843) (Fission yeast), this protein is UPF0652 protein C16A11.03c.